We begin with the raw amino-acid sequence, 129 residues long: MDTISQFLTMIRNAGAAKHEKVDMPASKVRAGIAQILVNEGFIRSFKVAKDSKQGIMRVYLKYDEAGGHAINNIDRVSRPGRRVYVKSDKIPTVRSGMGMSIISTSKGIMSGKQATEQKLGGELLATLW.

This sequence belongs to the universal ribosomal protein uS8 family. As to quaternary structure, part of the 30S ribosomal subunit. Contacts proteins S5 and S12.

Its function is as follows. One of the primary rRNA binding proteins, it binds directly to 16S rRNA central domain where it helps coordinate assembly of the platform of the 30S subunit. The sequence is that of Small ribosomal subunit protein uS8 from Bdellovibrio bacteriovorus (strain ATCC 15356 / DSM 50701 / NCIMB 9529 / HD100).